Consider the following 300-residue polypeptide: UDP-N-acetylenolpyruvoylglucosamine reductase (300 aa).

Residues 30–194 (KVGGAADFFV…VGATFRLDPA (165 aa)) enclose the FAD-binding PCMH-type domain. Residue R174 is part of the active site. S223 acts as the Proton donor in catalysis. E293 is an active-site residue.

The protein belongs to the MurB family. FAD is required as a cofactor.

The protein localises to the cytoplasm. It carries out the reaction UDP-N-acetyl-alpha-D-muramate + NADP(+) = UDP-N-acetyl-3-O-(1-carboxyvinyl)-alpha-D-glucosamine + NADPH + H(+). Its pathway is cell wall biogenesis; peptidoglycan biosynthesis. Its function is as follows. Cell wall formation. This is UDP-N-acetylenolpyruvoylglucosamine reductase from Geobacter metallireducens (strain ATCC 53774 / DSM 7210 / GS-15).